Reading from the N-terminus, the 134-residue chain is Large-conductance mechanosensitive channel (134 aa).

The next 2 membrane-spanning stretches (helical) occupy residues 16–36 (VVDMAVGIIIGVAFGKIVSSF) and 76–96 (GVFLQAIFDFIIIAFAIFIAV).

Belongs to the MscL family. Homopentamer.

Its subcellular location is the cell inner membrane. In terms of biological role, channel that opens in response to stretch forces in the membrane lipid bilayer. May participate in the regulation of osmotic pressure changes within the cell. This is Large-conductance mechanosensitive channel from Thioalkalivibrio sulfidiphilus (strain HL-EbGR7).